A 287-amino-acid chain; its full sequence is MPELPEVETVRGGLAPVLEGRRLVRVEARRPDLRFPLPPGFVQILTGSTIVKLERRAKYLLGRLDREDTLVMHLGMSGRFEIAHPEGEERPGRFHYAPDPDPKHAHVVFETEAGVRITYYDPRRFGYMSLVNTATLDLHPWFAGLGPEPLSDDFDAAHLKAAFTGRRQGPKTLLLDQRIVAGLGNIYVCEALNRARISPFKPAGRISRPRIEVLVAAIKDVLREAIAAGGSTLRDYAQADGALGYFQHSFRTYDREGQPCRNDGCRGVIGREVQAGRSTFYCPVCQR.

Catalysis depends on Pro-2, which acts as the Schiff-base intermediate with DNA. The Proton donor role is filled by Glu-3. The Proton donor; for beta-elimination activity role is filled by Lys-58. DNA contacts are provided by His-104, Arg-123, and Arg-166. An FPG-type zinc finger spans residues 251 to 287; that stretch reads RTYDREGQPCRNDGCRGVIGREVQAGRSTFYCPVCQR. Catalysis depends on Arg-277, which acts as the Proton donor; for delta-elimination activity.

This sequence belongs to the FPG family. Monomer. Zn(2+) serves as cofactor.

It catalyses the reaction Hydrolysis of DNA containing ring-opened 7-methylguanine residues, releasing 2,6-diamino-4-hydroxy-5-(N-methyl)formamidopyrimidine.. The catalysed reaction is 2'-deoxyribonucleotide-(2'-deoxyribose 5'-phosphate)-2'-deoxyribonucleotide-DNA = a 3'-end 2'-deoxyribonucleotide-(2,3-dehydro-2,3-deoxyribose 5'-phosphate)-DNA + a 5'-end 5'-phospho-2'-deoxyribonucleoside-DNA + H(+). Its function is as follows. Involved in base excision repair of DNA damaged by oxidation or by mutagenic agents. Acts as a DNA glycosylase that recognizes and removes damaged bases. Has a preference for oxidized purines, such as 7,8-dihydro-8-oxoguanine (8-oxoG). Has AP (apurinic/apyrimidinic) lyase activity and introduces nicks in the DNA strand. Cleaves the DNA backbone by beta-delta elimination to generate a single-strand break at the site of the removed base with both 3'- and 5'-phosphates. The protein is Formamidopyrimidine-DNA glycosylase of Phenylobacterium zucineum (strain HLK1).